The primary structure comprises 317 residues: Dehydrogenase/reductase SDR family member 12 (317 aa).

2 residues coordinate NAD(+): S50 and I52. S175 contacts substrate. Y201, K205, and T234 together coordinate NAD(+). Y201 (proton acceptor) is an active-site residue.

Belongs to the short-chain dehydrogenases/reductases (SDR) family.

Putative oxidoreductase. The polypeptide is Dehydrogenase/reductase SDR family member 12 (Homo sapiens (Human)).